Reading from the N-terminus, the 72-residue chain is uncharacterized protein (72 aa).

Residues 51–72 (AKGGRQKGEVVGVDDQCKEHKE) form a disordered region.

It belongs to the YiiE family.

This is an uncharacterized protein from Escherichia coli O157:H7.